Consider the following 343-residue polypeptide: 3-dehydroquinate synthase (343 aa).

NAD(+) is bound by residues 86–90 (GALLD), 110–111 (TT), K123, and K132. Residues E165, H229, and H243 each contribute to the Zn(2+) site.

This sequence belongs to the sugar phosphate cyclases superfamily. Dehydroquinate synthase family. It depends on Co(2+) as a cofactor. Requires Zn(2+) as cofactor. The cofactor is NAD(+).

The protein localises to the cytoplasm. The catalysed reaction is 7-phospho-2-dehydro-3-deoxy-D-arabino-heptonate = 3-dehydroquinate + phosphate. The protein operates within metabolic intermediate biosynthesis; chorismate biosynthesis; chorismate from D-erythrose 4-phosphate and phosphoenolpyruvate: step 2/7. In terms of biological role, catalyzes the conversion of 3-deoxy-D-arabino-heptulosonate 7-phosphate (DAHP) to dehydroquinate (DHQ). The sequence is that of 3-dehydroquinate synthase from Pyrobaculum neutrophilum (strain DSM 2338 / JCM 9278 / NBRC 100436 / V24Sta) (Thermoproteus neutrophilus).